Here is a 480-residue protein sequence, read N- to C-terminus: Trigger factor (480 aa).

Residues 169–264 enclose the PPIase FKBP-type domain; the sequence is GDIAVVDFKG…LKELKEKELP (96 aa). Residues 441–480 form a disordered region; that stretch reads PEGSLSPAEETEAAESDADADVSQTEQENSEPSTTEVTEG. Residues 449–460 show a composition bias toward acidic residues; the sequence is EETEAAESDADA. Residues 462–480 show a composition bias toward polar residues; it reads VSQTEQENSEPSTTEVTEG.

The protein belongs to the FKBP-type PPIase family. Tig subfamily.

The protein localises to the cytoplasm. The catalysed reaction is [protein]-peptidylproline (omega=180) = [protein]-peptidylproline (omega=0). In terms of biological role, involved in protein export. Acts as a chaperone by maintaining the newly synthesized protein in an open conformation. Functions as a peptidyl-prolyl cis-trans isomerase. This is Trigger factor from Nostoc punctiforme (strain ATCC 29133 / PCC 73102).